We begin with the raw amino-acid sequence, 300 residues long: Manganese-binding lipoprotein MntA (300 aa).

Residues 1 to 19 form the signal peptide; it reads MKKVCFSFVIMVIALIAAG. A lipid anchor (N-palmitoyl cysteine) is attached at Cys-20. Cys-20 is lipidated: S-diacylglycerol cysteine. Residues His-68, His-130, Glu-196, and Asp-271 each coordinate Mn(2+).

It belongs to the bacterial solute-binding protein 9 family.

Its subcellular location is the cell membrane. Its function is as follows. Probably part of ATP-binding cassette (ABC) transport system MntABCD involved in manganese import. Binds manganese and delivers it to the membrane permease for translocation into the cytoplasm. The chain is Manganese-binding lipoprotein MntA (mntA) from Halalkalibacterium halodurans (strain ATCC BAA-125 / DSM 18197 / FERM 7344 / JCM 9153 / C-125) (Bacillus halodurans).